The sequence spans 177 residues: Large ribosomal subunit protein uL6 (177 aa).

The protein belongs to the universal ribosomal protein uL6 family. In terms of assembly, part of the 50S ribosomal subunit.

In terms of biological role, this protein binds to the 23S rRNA, and is important in its secondary structure. It is located near the subunit interface in the base of the L7/L12 stalk, and near the tRNA binding site of the peptidyltransferase center. The sequence is that of Large ribosomal subunit protein uL6 from Alkalilimnicola ehrlichii (strain ATCC BAA-1101 / DSM 17681 / MLHE-1).